The following is a 939-amino-acid chain: Aconitate hydratase A (939 aa).

The disordered stretch occupies residues 433-453 (GSGESLATGAEGRPSKPVTVA). Cys-475, Cys-541, and Cys-544 together coordinate [4Fe-4S] cluster.

It belongs to the aconitase/IPM isomerase family. As to quaternary structure, monomer. The cofactor is [4Fe-4S] cluster.

It catalyses the reaction citrate = D-threo-isocitrate. The enzyme catalyses (2S,3R)-3-hydroxybutane-1,2,3-tricarboxylate = 2-methyl-cis-aconitate + H2O. The protein operates within carbohydrate metabolism; tricarboxylic acid cycle; isocitrate from oxaloacetate: step 2/2. It participates in organic acid metabolism; propanoate degradation. Functionally, involved in the catabolism of short chain fatty acids (SCFA) via the tricarboxylic acid (TCA)(acetyl degradation route) and probably via the 2-methylcitrate cycle I (propionate degradation route). Catalyzes the reversible isomerization of citrate to isocitrate via cis-aconitate. Could catalyze the hydration of 2-methyl-cis-aconitate to yield (2R,3S)-2-methylisocitrate. The apo form of AcnA functions as a RNA-binding regulatory protein. The chain is Aconitate hydratase A (acn) from Corynebacterium glutamicum (strain ATCC 13032 / DSM 20300 / JCM 1318 / BCRC 11384 / CCUG 27702 / LMG 3730 / NBRC 12168 / NCIMB 10025 / NRRL B-2784 / 534).